Reading from the N-terminus, the 199-residue chain is Superoxide dismutase [Mn/Fe] (199 aa).

The Fe(3+) site is built by His-27, His-81, Asp-161, and His-165. Residues His-27, His-81, Asp-161, and His-165 each coordinate Mn(2+).

The protein belongs to the iron/manganese superoxide dismutase family. Homodimer. The cofactor is Mn(2+). Requires Fe(3+) as cofactor.

It catalyses the reaction 2 superoxide + 2 H(+) = H2O2 + O2. In terms of biological role, destroys superoxide anion radicals which are normally produced within the cells and which are toxic to biological systems. Catalyzes the dismutation of superoxide anion radicals into O2 and H2O2 by successive reduction and oxidation of the transition metal ion at the active site. The protein is Superoxide dismutase [Mn/Fe] (sodA) of Staphylococcus haemolyticus (strain JCSC1435).